The following is a 1066-amino-acid chain: Bifunctional cytochrome P450/NADPH--P450 reductase (1066 aa).

Residues 1–480 form a cytochrome P450 region; it reads MAESVPIPEP…LAGNGATSSS (480 aa). A heme-binding site is contributed by Cys407. An NADPH-P-450 reductase region spans residues 481-1066; sequence THNIKAAANL…NERFATDVFD (586 aa). The region spanning 500–641 is the Flavodoxin-like domain; sequence MAIFYGSNSG…DFEAWEDIVL (142 aa). FMN-binding positions include 506-511, 554-557, Cys588, and Thr596; these read SNSGTC and SYEG. Positions 676–904 constitute an FAD-binding FR-type domain; that stretch reads QDVEEALVVA…RASSEAFHLP (229 aa).

In the N-terminal section; belongs to the cytochrome P450 family. It depends on FAD as a cofactor. FMN is required as a cofactor. The cofactor is heme.

Its subcellular location is the membrane. The enzyme catalyses an organic molecule + reduced [NADPH--hemoprotein reductase] + O2 = an alcohol + oxidized [NADPH--hemoprotein reductase] + H2O + H(+). It catalyses the reaction 2 oxidized [cytochrome P450] + NADPH = 2 reduced [cytochrome P450] + NADP(+) + H(+). Its activity is regulated as follows. Stimulated NADPH--cytochrome reductase activity in the presence of substrate. Inhibited by fatty acid substrates longer than 13 carbons and the degree of inhibition increases with increasing chain length. Functions as a fatty acid monooxygenase. Catalyzes hydroxylation of fatty acids at omega-1, omega-2 and omega-3 positions. Shows activity toward fatty acids with a chain length of 9-18 carbons with optimum chain lengths of 12-14 carbons (lauric, tridecylic and myristic acids). Can also use shorter saturated fatty acids with a chain length of 9 or 10 carbons as substrates. Also displays a NADPH-dependent reductase activity in the C-terminal domain, which allows electron transfer from NADPH to the heme iron of the cytochrome P450 N-terminal domain. The protein is Bifunctional cytochrome P450/NADPH--P450 reductase of Fusarium oxysporum (Fusarium vascular wilt).